The sequence spans 739 residues: Polyribonucleotide nucleotidyltransferase (739 aa).

2 residues coordinate Mg(2+): Asp-514 and Asp-520. Residues 580-639 (PRIITVKIPVDKIGEVIGPKGKMINQIQEDTGADITIEDDGTIYIGAAQGSQAEAARATI) form the KH domain. Residues 651-723 (GERYLGTVVK…SRGKLSLIPV (73 aa)) enclose the S1 motif domain.

This sequence belongs to the polyribonucleotide nucleotidyltransferase family. Mg(2+) serves as cofactor.

It localises to the cytoplasm. It catalyses the reaction RNA(n+1) + phosphate = RNA(n) + a ribonucleoside 5'-diphosphate. In terms of biological role, involved in mRNA degradation. Catalyzes the phosphorolysis of single-stranded polyribonucleotides processively in the 3'- to 5'-direction. This chain is Polyribonucleotide nucleotidyltransferase, found in Streptomyces coelicolor (strain ATCC BAA-471 / A3(2) / M145).